The sequence spans 487 residues: Betaine aldehyde dehydrogenase (487 aa).

2 residues coordinate K(+): Ile-27 and Asp-93. NAD(+) is bound at residue 149–151 (GAW). The Charge relay system role is filled by Lys-161. Residues 175–178 (KPSE) and 228–231 (SVPT) contribute to the NAD(+) site. Leu-243 serves as a coordination point for K(+). Glu-249 serves as the catalytic Proton acceptor. Gly-251, Cys-283, and Glu-384 together coordinate NAD(+). The Nucleophile role is filled by Cys-283. Cys-283 is subject to Cysteine sulfenic acid (-SOH). Lys-454 and Gly-457 together coordinate K(+). The active-site Charge relay system is the Glu-461.

It belongs to the aldehyde dehydrogenase family. As to quaternary structure, dimer of dimers. Requires K(+) as cofactor.

It catalyses the reaction betaine aldehyde + NAD(+) + H2O = glycine betaine + NADH + 2 H(+). It participates in amine and polyamine biosynthesis; betaine biosynthesis via choline pathway; betaine from betaine aldehyde: step 1/1. In terms of biological role, involved in the biosynthesis of the osmoprotectant glycine betaine. Catalyzes the irreversible oxidation of betaine aldehyde to the corresponding acid. The protein is Betaine aldehyde dehydrogenase of Brucella suis (strain ATCC 23445 / NCTC 10510).